The primary structure comprises 89 residues: Large ribosomal subunit protein bL31B (89 aa).

Belongs to the bacterial ribosomal protein bL31 family. Type B subfamily. As to quaternary structure, part of the 50S ribosomal subunit.

This Actinobacillus pleuropneumoniae serotype 5b (strain L20) protein is Large ribosomal subunit protein bL31B.